Reading from the N-terminus, the 457-residue chain is V-type ATP synthase beta chain (457 aa).

Belongs to the ATPase alpha/beta chains family.

Produces ATP from ADP in the presence of a proton gradient across the membrane. The V-type beta chain is a regulatory subunit. The protein is V-type ATP synthase beta chain of Clostridioides difficile (strain 630) (Peptoclostridium difficile).